The primary structure comprises 84 residues: Toxin To10 (84 aa).

Positions 1 to 19 (MNYSTLIAVASLLTAGTES) are cleaved as a signal peptide. Positions 21-80 (KDGYPVEGSCAFPCGYDNAYCDKLCKERKADSGYCYWVNILCYCYGLPDNAAIKGYGRCK) constitute an LCN-type CS-alpha/beta domain. Disulfide bonds link Cys30–Cys79, Cys34–Cys55, Cys41–Cys62, and Cys45–Cys64. Pro81 carries the proline amide modification.

The protein belongs to the long (4 C-C) scorpion toxin superfamily. Sodium channel inhibitor family. Alpha subfamily. In terms of tissue distribution, expressed by the venom gland.

It is found in the secreted. Its function is as follows. Alpha toxins bind voltage-independently at site-3 of sodium channels (Nav) and inhibit the inactivation of the activated channels, thereby blocking neuronal transmission. This Tityus obscurus (Amazonian scorpion) protein is Toxin To10.